Here is a 278-residue protein sequence, read N- to C-terminus: Octanoyl-[GcvH]:protein N-octanoyltransferase (278 aa).

Residues 41 to 247 (LVSPPTIRTW…LLHRLAGEVH (207 aa)) form the BPL/LPL catalytic domain. The Acyl-thioester intermediate role is filled by cysteine 146.

The protein belongs to the octanoyltransferase LipL family.

The catalysed reaction is N(6)-octanoyl-L-lysyl-[glycine-cleavage complex H protein] + L-lysyl-[lipoyl-carrier protein] = N(6)-octanoyl-L-lysyl-[lipoyl-carrier protein] + L-lysyl-[glycine-cleavage complex H protein]. Its pathway is protein modification; protein lipoylation via endogenous pathway; protein N(6)-(lipoyl)lysine from octanoyl-[acyl-carrier-protein]. Its function is as follows. Catalyzes the amidotransfer (transamidation) of the octanoyl moiety from octanoyl-GcvH to the lipoyl domain of the E2 subunit of lipoate-dependent enzymes. The polypeptide is Octanoyl-[GcvH]:protein N-octanoyltransferase (Lysinibacillus sphaericus (strain C3-41)).